The primary structure comprises 506 residues: Lysine--tRNA ligase (506 aa).

Positions 416 and 423 each coordinate Mg(2+).

It belongs to the class-II aminoacyl-tRNA synthetase family. As to quaternary structure, homodimer. Mg(2+) is required as a cofactor.

The protein localises to the cytoplasm. The enzyme catalyses tRNA(Lys) + L-lysine + ATP = L-lysyl-tRNA(Lys) + AMP + diphosphate. In Bordetella bronchiseptica (strain ATCC BAA-588 / NCTC 13252 / RB50) (Alcaligenes bronchisepticus), this protein is Lysine--tRNA ligase.